The chain runs to 492 residues: Ammonium transporter MEP1 (492 aa).

Residues 1–18 are Extracellular-facing; that stretch reads MESRTTGPLTTETYDGPT. Residues 19-39 traverse the membrane as a helical segment; sequence VAFMILGAALVFFMVPGLGFL. At 40-49 the chain is on the cytoplasmic side; sequence YSGLARRKSA. The helical transmembrane segment at 50–70 threads the bilayer; that stretch reads LALIWVVLMATLVGILQWYFW. Residues 71 to 109 are Extracellular-facing; it reads GYSLAFSKSAPNNKFIGNLDSFGFRNVYGKKFDEDAYPE. A helical membrane pass occupies residues 110-130; that stretch reads LAYATFQMMFSCVNLSIIAGA. Residues 131-140 are Cytoplasmic-facing; it reads TAERGRLLPH. Residues 141 to 161 traverse the membrane as a helical segment; it reads MVFLFILATIGYCPVTYWIWS. Residues 162 to 174 are Extracellular-facing; that stretch reads PGGWAYQWGVLDW. The chain crosses the membrane as a helical span at residues 175–195; the sequence is AGGGNIEILSAVSGFVYSWFL. Topologically, residues 196–210 are cytoplasmic; it reads GKRNEKLLINFRPHN. Residues 211-231 form a helical membrane-spanning segment; it reads VSLVTLGTSILWFGWLLFNSA. Topologically, residues 232–240 are extracellular; it reads SSLSPNLRS. A helical transmembrane segment spans residues 241–261; the sequence is VYAFMNTCLSAITGGMTWCLL. The Cytoplasmic segment spans residues 262-268; it reads DYRSEKK. A helical transmembrane segment spans residues 269 to 289; it reads WSTVGLCSGIISGLVAATPSS. Position 290 (G290) is a topological domain, extracellular. A helical membrane pass occupies residues 291–311; that stretch reads CITLYGSLIQGIVAGVVCNFA. Residues 312–331 are Cytoplasmic-facing; the sequence is TKLKYYAKVDDAMDILAEHG. Residues 332–352 form a helical membrane-spanning segment; sequence VAGVIGLIFNALFGADWVIGM. The Extracellular portion of the chain corresponds to 353 to 373; that stretch reads DGTTEHEGGWVTHNYKQMYKQ. The helical transmembrane segment at 374–394 threads the bilayer; it reads IAYIAASIGYTAAVTAIICFV. Over 395–492 the chain is Cytoplasmic; it reads LGYIPGMRLR…PIHQEDPANR (98 aa). Phosphoserine is present on residues S442 and S445. Positions 455–492 are disordered; that stretch reads HLAAERSSSGTNSSSDGNGEMIQSEKILPIHQEDPANR. The segment covering 461 to 473 has biased composition (low complexity); sequence SSSGTNSSSDGNG.

Belongs to the ammonia transporter channel (TC 1.A.11.2) family.

It is found in the membrane. Functionally, transporter for ammonium (both charged and uncharged NH3 and NH4) to use as a nitrogen source. Can also transport methylamine. The affinity of MEP1 is about twenty times lower than that of MEP2. MEP3 has the lowest affinity. This is Ammonium transporter MEP1 (MEP1) from Saccharomyces cerevisiae (strain ATCC 204508 / S288c) (Baker's yeast).